The sequence spans 840 residues: DNA mismatch repair protein MutS (840 aa).

601–608 (GPNMSGKS) contributes to the ATP binding site.

Belongs to the DNA mismatch repair MutS family.

In terms of biological role, this protein is involved in the repair of mismatches in DNA. It is possible that it carries out the mismatch recognition step. This protein has a weak ATPase activity. In Lactococcus lactis subsp. cremoris (strain MG1363), this protein is DNA mismatch repair protein MutS.